The following is a 155-amino-acid chain: Aspartate carbamoyltransferase regulatory chain (155 aa).

Zn(2+)-binding residues include Cys111, Cys116, Cys137, and Cys140.

This sequence belongs to the PyrI family. Contains catalytic and regulatory chains. Zn(2+) is required as a cofactor.

Involved in allosteric regulation of aspartate carbamoyltransferase. The protein is Aspartate carbamoyltransferase regulatory chain of Haloarcula marismortui (strain ATCC 43049 / DSM 3752 / JCM 8966 / VKM B-1809) (Halobacterium marismortui).